Consider the following 527-residue polypeptide: G patch domain-containing protein 2 (527 aa).

A disordered region spans residues 35 to 135 (LEESSEQARG…RPSSNLSSSV (101 aa)). Basic residues predominate over residues 62-76 (RQARKRRGRKRRSYN). Residues 97 to 116 (EPSKDYREKHSNNKKDRSDS) show a composition bias toward basic and acidic residues. 3 positions are modified to phosphoserine: S114, S116, and S145. Disordered regions lie at residues 175 to 281 (SSKR…GDDE), 350 to 375 (TPSK…GSNK), and 480 to 527 (TPGS…GNPA). Over residues 186 to 196 (GCRDQDMDNDR) the composition is skewed to basic and acidic residues. Basic residues predominate over residues 206 to 215 (KKVKKRKLKG). Over residues 231 to 257 (SEERSQPNKDRMEYEEQKASDELRSES) the composition is skewed to basic and acidic residues. One can recognise a G-patch domain in the interval 466 to 512 (ESNIGNRMLQSMGWTPGSGLGRDGRGIAEPVQAVQRPKGLGLGFPLP). Positions 510 to 527 (PLPKSSPTSPAPTSGNPA) are enriched in low complexity.

As to quaternary structure, interacts with DHX15.

Its subcellular location is the nucleus speckle. It is found in the nucleus. It localises to the nucleolus. In terms of biological role, enhances the ATPase activity of DHX15 in vitro. This is G patch domain-containing protein 2 (Gpatch2) from Mus musculus (Mouse).